The sequence spans 103 residues: Co-chaperonin GroES (103 aa).

It belongs to the GroES chaperonin family. In terms of assembly, heptamer of 7 subunits arranged in a ring. Interacts with the chaperonin GroEL.

It is found in the cytoplasm. Together with the chaperonin GroEL, plays an essential role in assisting protein folding. The GroEL-GroES system forms a nano-cage that allows encapsulation of the non-native substrate proteins and provides a physical environment optimized to promote and accelerate protein folding. GroES binds to the apical surface of the GroEL ring, thereby capping the opening of the GroEL channel. The polypeptide is Co-chaperonin GroES (Rippkaea orientalis (strain PCC 8801 / RF-1) (Cyanothece sp. (strain PCC 8801))).